Consider the following 249-residue polypeptide: Isoprenyl transferase (249 aa).

The active site involves aspartate 25. Aspartate 25 contributes to the Mg(2+) binding site. Substrate contacts are provided by residues 26 to 29, tryptophan 30, arginine 38, histidine 42, and 70 to 72; these read GNGR and STE. Asparagine 73 functions as the Proton acceptor in the catalytic mechanism. Residues tryptophan 74, arginine 76, arginine 197, and 203–205 contribute to the substrate site; that span reads RLS. Mg(2+) is bound at residue glutamate 216.

It belongs to the UPP synthase family. As to quaternary structure, homodimer. The cofactor is Mg(2+).

In terms of biological role, catalyzes the condensation of isopentenyl diphosphate (IPP) with allylic pyrophosphates generating different type of terpenoids. The protein is Isoprenyl transferase of Streptococcus thermophilus (strain CNRZ 1066).